Here is a 160-residue protein sequence, read N- to C-terminus: uncharacterized protein (160 aa).

A helical transmembrane segment spans residues Y137–V157.

It localises to the host membrane. It is found in the virion. This is an uncharacterized protein from Acanthamoeba polyphaga mimivirus (APMV).